Consider the following 259-residue polypeptide: HTH-type quorum sensing-dependent transcriptional regulator VjbR (259 aa).

The interval lysine 76 to glycine 179 is C12-HSL binding. The region spanning alanine 183–glycine 248 is the HTH luxR-type domain. The segment at residues aspartate 207–glutamine 226 is a DNA-binding region (H-T-H motif).

Its function is as follows. Transcriptional regulator involved in the global control of Brucella gene expression. Mediates the effects of the quorum sensing autoinducer C12-HSL (N-dodecanoyl-homoserine lactone) on a large and diverse number of genes. The polypeptide is HTH-type quorum sensing-dependent transcriptional regulator VjbR (vjbR) (Brucella suis biovar 1 (strain 1330)).